The chain runs to 481 residues: MIKIETVLDILKKDGLFREIIDQGHYHYNYSKVIFDSISYDSRKVTEDTLFFAKGAAFKKEYLLSAITQGLAWYVAEKDYEVDIPVIIVNDIKKAMSLIAMEFYGNPQEKLKLLAFTGTKGKTTATYFAYNILSQGHRPAMLSTMNTTLDGETFFKSALTTPESIDLFDMMNQAVQNDRTHLIMEVSSQAYLVHRVYGLTFDVGVFLNITPDHIGPIEHPSFEDYFYHKRLLMENSRAVIINSDMDHFSVLKEQVEDQDHDFYGSQFDNQIENSKAFSFSATGKLAGDYDIQLIGNFNQENAVAAGLACLRLGASLEDIKKGIAATRVPGRMEVLTQKNGAKVFIDYAHNGDSLKKLINVVETHQTGKIALVLGSTGNKGESRRKDFGLLLNQHPEIQVFLTADDPNYEDPMAIADEISSYINHPVEKIADRQEAIKAAMAITNHELDAVIIAGKGADCYQIIQGKKESYPGDTAVAENYL.

A UDP-N-acetyl-alpha-D-muramoyl-L-alanyl-D-glutamate-binding site is contributed by Ser-42. Gly-118–Thr-124 is a binding site for ATP. UDP-N-acetyl-alpha-D-muramoyl-L-alanyl-D-glutamate-binding positions include Thr-160–Thr-161, Ser-187, and Arg-195. N6-carboxylysine is present on Lys-229. Residues Asp-404–Asn-407 carry the L-lysine recognition motif motif.

The protein belongs to the MurCDEF family. MurE subfamily. Post-translationally, carboxylation is probably crucial for Mg(2+) binding and, consequently, for the gamma-phosphate positioning of ATP.

The protein resides in the cytoplasm. It carries out the reaction UDP-N-acetyl-alpha-D-muramoyl-L-alanyl-D-glutamate + L-lysine + ATP = UDP-N-acetyl-alpha-D-muramoyl-L-alanyl-gamma-D-glutamyl-L-lysine + ADP + phosphate + H(+). The protein operates within cell wall biogenesis; peptidoglycan biosynthesis. Functionally, catalyzes the addition of L-lysine to the nucleotide precursor UDP-N-acetylmuramoyl-L-alanyl-D-glutamate (UMAG) in the biosynthesis of bacterial cell-wall peptidoglycan. The chain is UDP-N-acetylmuramoyl-L-alanyl-D-glutamate--L-lysine ligase from Streptococcus pneumoniae (strain ATCC BAA-255 / R6).